Here is a 142-residue protein sequence, read N- to C-terminus: Prefoldin subunit alpha (142 aa).

It belongs to the prefoldin subunit alpha family. In terms of assembly, heterohexamer of two alpha and four beta subunits.

The protein resides in the cytoplasm. Its function is as follows. Molecular chaperone capable of stabilizing a range of proteins. Seems to fulfill an ATP-independent, HSP70-like function in archaeal de novo protein folding. This Methanosarcina acetivorans (strain ATCC 35395 / DSM 2834 / JCM 12185 / C2A) protein is Prefoldin subunit alpha.